The chain runs to 91 residues: Small ribosomal subunit protein uS19 (91 aa).

The protein belongs to the universal ribosomal protein uS19 family.

In terms of biological role, protein S19 forms a complex with S13 that binds strongly to the 16S ribosomal RNA. This is Small ribosomal subunit protein uS19 from Prochlorococcus marinus subsp. pastoris (strain CCMP1986 / NIES-2087 / MED4).